The following is a 78-amino-acid chain: RNA-binding protein Hfq (78 aa).

Positions 9 to 69 (DHFLNQLRKE…ISTFAPQRNV (61 aa)) constitute a Sm domain.

Belongs to the Hfq family. Homohexamer.

Its function is as follows. RNA chaperone that binds small regulatory RNA (sRNAs) and mRNAs to facilitate mRNA translational regulation in response to envelope stress, environmental stress and changes in metabolite concentrations. Also binds with high specificity to tRNAs. This chain is RNA-binding protein Hfq, found in Halalkalibacterium halodurans (strain ATCC BAA-125 / DSM 18197 / FERM 7344 / JCM 9153 / C-125) (Bacillus halodurans).